The chain runs to 1531 residues: Protein turtle (1531 aa).

The Extracellular segment spans residues 1-858 (MGVCADLGSH…PARVKHKAIT (858 aa)). A disordered region spans residues 19–44 (QHNTEKSKEQQQQSQPLEIPEQRASK). 5 Ig-like C2-type domains span residues 132–243 (PEDA…KNGT), 253–340 (PRFS…ARVI), 344–436 (GAVI…AYLS), 440–529 (PAKV…GVMD), and 536–624 (PAFT…MAVT). Disulfide bonds link cysteine 150–cysteine 227, cysteine 275–cysteine 324, cysteine 366–cysteine 419, cysteine 462–cysteine 513, and cysteine 558–cysteine 611. Fibronectin type-III domains are found at residues 632–728 (QPHA…TLED) and 760–851 (PPRN…VPAR). Residues 859-879 (AGVVGGILFFIVAIILSVCAV) form a helical membrane-spanning segment. The Cytoplasmic portion of the chain corresponds to 880–1531 (KICNKRKRRK…QAMQQMESVC (652 aa)). 2 disordered regions span residues 1248–1269 (EETR…VPLQ) and 1318–1395 (NLNL…SYPR). Positions 1333–1349 (SPESRSSSSGFGSKNTS) are enriched in low complexity. Over residues 1380–1389 (QQAQGQTPHG) the composition is skewed to polar residues.

This sequence belongs to the immunoglobulin superfamily. Turtle family. Interacts with bdl. Exclusively expressed in the central nervous system.

Its subcellular location is the membrane. Functionally, essential protein that plays a role in the establishment of coordinated motor control. In the developing eye, involved in axonal targeting of the R7 photoreceptor. The sequence is that of Protein turtle (tutl) from Drosophila melanogaster (Fruit fly).